Reading from the N-terminus, the 1132-residue chain is Cytospin-A (1132 aa).

The segment at 1–166 (MKKAGRPVGN…SKSDGQLSDK (166 aa)) is disordered. Low complexity-rich tracts occupy residues 73–109 (STHS…SKES) and 119–129 (SRNSSSKKQSS). The span at 150 to 159 (SESRMSKSKS) shows a compositional bias: basic and acidic residues. A coiled-coil region spans residues 226–268 (DVESTLLLLQEQNQAIRGELNLLKNENRMLKDRLNALGFSLEQ). A disordered region spans residues 301 to 381 (ASSVEGSAPG…RKGSSGNTSE (81 aa)). The span at 333–343 (SEVYQAVTSSD) shows a compositional bias: polar residues. A compositionally biased stretch (low complexity) spans 348–377 (APSGCGSSSSSESEGGPPACRSSSRKGSSG). Coiled-coil stretches lie at residues 385–440 (ACLT…MDSL) and 478–798 (RYME…RGRV). Disordered stretches follow at residues 869 to 895 (TSTT…AAAV) and 939 to 1016 (SRPA…RKDP). The segment covering 875 to 889 (APLPRTPLSPSPMKT) has biased composition (pro residues). Residues 946–961 (QRVSNMDTSKTITVSR) are compositionally biased toward polar residues. Residues 962–972 (RSSEEPKRDIS) are compositionally biased toward basic and acidic residues. The span at 979–1000 (ASSLISMSSAAALSSSSSPTAS) shows a compositional bias: low complexity. Residues 1026-1131 (GSKRNALLRW…YVTSIYKYFE (106 aa)) form the Calponin-homology (CH) domain.

It belongs to the cytospin-A family. As to quaternary structure, may interact with both microtubules and actin cytoskeleton.

Its subcellular location is the cytoplasm. The protein resides in the cytoskeleton. It localises to the spindle. It is found in the cell junction. The protein localises to the gap junction. In terms of biological role, involved in cytokinesis and spindle organization. May play a role in actin cytoskeleton organization and microtubule stabilization and hence required for proper cell adhesion and migration. In Danio rerio (Zebrafish), this protein is Cytospin-A (specc1la).